The sequence spans 245 residues: Ribonuclease PH (245 aa).

Residues R86 and 124 to 126 (GTR) each bind phosphate.

Belongs to the RNase PH family. Homohexameric ring arranged as a trimer of dimers.

It catalyses the reaction tRNA(n+1) + phosphate = tRNA(n) + a ribonucleoside 5'-diphosphate. Functionally, phosphorolytic 3'-5' exoribonuclease that plays an important role in tRNA 3'-end maturation. Removes nucleotide residues following the 3'-CCA terminus of tRNAs; can also add nucleotides to the ends of RNA molecules by using nucleoside diphosphates as substrates, but this may not be physiologically important. Probably plays a role in initiation of 16S rRNA degradation (leading to ribosome degradation) during starvation. In Bacillus mycoides (strain KBAB4) (Bacillus weihenstephanensis), this protein is Ribonuclease PH.